A 253-amino-acid chain; its full sequence is Trans-aconitate 2-methyltransferase (253 aa).

The protein belongs to the methyltransferase superfamily. Tam family.

It localises to the cytoplasm. The catalysed reaction is trans-aconitate + S-adenosyl-L-methionine = (E)-3-(methoxycarbonyl)pent-2-enedioate + S-adenosyl-L-homocysteine. Functionally, catalyzes the S-adenosylmethionine monomethyl esterification of trans-aconitate. The sequence is that of Trans-aconitate 2-methyltransferase from Klebsiella pneumoniae (strain 342).